A 258-amino-acid polypeptide reads, in one-letter code: Pyridoxine 5'-phosphate synthase (258 aa).

Asn16 is a binding site for 3-amino-2-oxopropyl phosphate. 1-deoxy-D-xylulose 5-phosphate is bound at residue 18-19 (DH). A 3-amino-2-oxopropyl phosphate-binding site is contributed by Arg27. His52 functions as the Proton acceptor in the catalytic mechanism. 2 residues coordinate 1-deoxy-D-xylulose 5-phosphate: Arg54 and His59. The active-site Proton acceptor is Glu79. Residue Thr109 participates in 1-deoxy-D-xylulose 5-phosphate binding. The Proton donor role is filled by His200. 3-amino-2-oxopropyl phosphate is bound by residues Gly201 and 222–223 (GH).

It belongs to the PNP synthase family. As to quaternary structure, homooctamer; tetramer of dimers.

Its subcellular location is the cytoplasm. The catalysed reaction is 3-amino-2-oxopropyl phosphate + 1-deoxy-D-xylulose 5-phosphate = pyridoxine 5'-phosphate + phosphate + 2 H2O + H(+). Its pathway is cofactor biosynthesis; pyridoxine 5'-phosphate biosynthesis; pyridoxine 5'-phosphate from D-erythrose 4-phosphate: step 5/5. Its function is as follows. Catalyzes the complicated ring closure reaction between the two acyclic compounds 1-deoxy-D-xylulose-5-phosphate (DXP) and 3-amino-2-oxopropyl phosphate (1-amino-acetone-3-phosphate or AAP) to form pyridoxine 5'-phosphate (PNP) and inorganic phosphate. In Burkholderia lata (strain ATCC 17760 / DSM 23089 / LMG 22485 / NCIMB 9086 / R18194 / 383), this protein is Pyridoxine 5'-phosphate synthase.